The chain runs to 1628 residues: Lysine-specific histone demethylase 1 homolog 3 (1628 aa).

Residues 1-71 (MDGKEKKSGS…KKLSALGKDS (71 aa)) are disordered. The segment covering 19-28 (FDDDADDDEP) has biased composition (acidic residues). The segment covering 43 to 64 (KDKVETESTGKQRQKQVVEKKL) has biased composition (basic and acidic residues). Positions 378-478 (GRAAAVTAGL…AGISSVNGKA (101 aa)) constitute an SWIRM domain. The FAD site is built by E647, R649, R655, and E1077. The tract at residues 1271 to 1317 (SGKKSLRQANTTNTSRIRRKLNSPDTDSKGKLSNGNDVKTDEEFEDN) is disordered.

The protein belongs to the flavin monoamine oxidase family. The cofactor is FAD.

In terms of biological role, probable histone demethylase that reduces the levels of histone H3 'Lys-4' methylation in chromatin. This is Lysine-specific histone demethylase 1 homolog 3 (LDL3) from Arabidopsis thaliana (Mouse-ear cress).